Here is a 1418-residue protein sequence, read N- to C-terminus: ABC transporter G family member 38 (1418 aa).

The disordered stretch occupies residues 1–27 (MAHYRVSSEVENIMNRDRSHRKNEEED). Residues 147-419 (TKIRVLPDRK…FEFMGFKCPE (273 aa)) enclose the ABC transporter 1 domain. 179-186 (GPPGSGKS) contacts ATP. Positions 497–710 (ELLKACLERE…IQTAVSVNEF (214 aa)) constitute an ABC transmembrane type-2 1 domain. 6 consecutive transmembrane segments (helical) span residues 516–536 (TFVL…VVFW), 548–568 (GIIY…SGFF), 600–620 (IITF…TYFT), 634–654 (YLVL…IAAV), 659–679 (VVSN…SGYV), and 729–749 (FFVE…STIL). The ABC transporter 2 domain occupies 821–1073 (MTFENITYSV…QLIEYFEGIR (253 aa)). Residue 866-873 (GVSGAGKT) coordinates ATP. Positions 1146 to 1360 (SQFQACLWKQ…GLYGLTIAQY (215 aa)) constitute an ABC transmembrane type-2 2 domain. 7 helical membrane passes run 1167 to 1187 (AVRF…FWSL), 1197 to 1217 (IFNS…QSAA), 1249 to 1269 (VIIE…IVYG), 1284 to 1304 (IFFT…VISV), 1310 to 1330 (IASI…GFTI), 1341 to 1361 (WFTY…AQYG), and 1387 to 1407 (FLWV…FIYA).

Belongs to the ABC transporter superfamily. ABCG family. PDR (TC 3.A.1.205) subfamily. Expressed in roots and siliques at low levels.

It localises to the membrane. In terms of biological role, may be a general defense protein. This Arabidopsis thaliana (Mouse-ear cress) protein is ABC transporter G family member 38 (ABCG38).